The chain runs to 1227 residues: Codanin-1 (1227 aa).

A2 is modified (N-acetylalanine). The tract at residues 63-294 is disordered; that stretch reads RVLPQGPPTP…SLTDEPADPA (232 aa). T71 is subject to Phosphothreonine. The segment covering 128–137 has biased composition (basic and acidic residues); it reads ARERGGRGLE. The segment covering 155-167 has biased composition (low complexity); that stretch reads GSGSPSRPSLTLS. The segment at 188 to 208 is interaction with ASF1A/B; sequence PTGTKPSRRINPTPVSEERSL. Over residues 214-232 the composition is skewed to polar residues; sequence CFTSPPISCVPSSQPSALD. Basic and acidic residues predominate over residues 247–260; the sequence is LQEEREMLRKERSK. Phosphoserine occurs at positions 265 and 285. Transmembrane regions (helical) follow at residues 312–332 and 626–646; these read CIAENLVPNLFLELFFVFQLL and FAVVLLSLRLLAKFLGFVAFL.

As to quaternary structure, found in a cytosolic complex with ASF1A, ASF1B, IPO4 and histones H3.1 and H4. In terms of tissue distribution, ubiquitously expressed. Isoform 3 is not found in erythroid cells.

The protein localises to the cytoplasm. It is found in the nucleus. Its subcellular location is the membrane. Functionally, may act as a negative regulator of ASF1 in chromatin assembly. The polypeptide is Codanin-1 (CDAN1) (Homo sapiens (Human)).